Here is a 198-residue protein sequence, read N- to C-terminus: Probable GTP-binding protein EngB (198 aa).

The EngB-type G domain maps to 22–197 (TLPEYAFIGR…LDYIEGINNS (176 aa)). GTP-binding positions include 30–37 (GRSNVGKS), 57–61 (GKTQL), 75–78 (DLPG), 142–145 (TKAD), and 175–178 (ITSA). S37 and T59 together coordinate Mg(2+).

It belongs to the TRAFAC class TrmE-Era-EngA-EngB-Septin-like GTPase superfamily. EngB GTPase family. Requires Mg(2+) as cofactor.

In terms of biological role, necessary for normal cell division and for the maintenance of normal septation. In Christiangramia forsetii (strain DSM 17595 / CGMCC 1.15422 / KT0803) (Gramella forsetii), this protein is Probable GTP-binding protein EngB.